The primary structure comprises 254 residues: Small ribosomal subunit protein uS2 (254 aa).

The protein belongs to the universal ribosomal protein uS2 family.

The chain is Small ribosomal subunit protein uS2 from Legionella pneumophila (strain Corby).